The sequence spans 500 residues: MSFVLAIDQGTTSSRAMVFRSDISIAAVAQQEFPQHFPASGWVEHEPEDIWTSTVMTCRDALEKAGLAAKDIAAIGITNQRETTVVWDRATGQAVHRAIVWQDRRTADICAKLKAEGHEPDVSARTGLIIDPYFSGTKVAWILDHVPGARERAERGELLFGTVDCYLLWRLTGGRVHATDATNASRTLLFNIHTGQWDDTLLKLLRVPRSMLPEVKDSSADFGTTTPDLFGGPIKVAGIAGDQQAATIGQACFTPGMMKSTYGTGCFALLNTGATPVKSNNKLLTTIAYQLNGIRTYALEGSIFVAGSAVQWLRDGLGIIKHAAETGPLADKSDSMQSVYLVPAFVGLGAPYWNPRVRGALFGLTRNTGPAELAHATLESVCYQTYDLWAAMRADWPDASAATIVLRVDGGMTASDWTMQRLADLLDAPVDRPMIQETTALGAAYLAGLNAGVYPEPEKFADNWRLEHRFRPAMSAATRQRKLAGWARAVKGVLASDEGE.

Thr11 contributes to the ADP binding site. Residues Thr11, Thr12, and Ser13 each coordinate ATP. Position 11 (Thr11) interacts with sn-glycerol 3-phosphate. An ADP-binding site is contributed by Arg15. Sn-glycerol 3-phosphate-binding residues include Arg81, Glu82, Tyr133, and Asp242. Glycerol-binding residues include Arg81, Glu82, Tyr133, Asp242, and Gln243. Residues Thr264 and Gly307 each coordinate ADP. Residues Thr264, Gly307, Gln311, and Gly411 each contribute to the ATP site. Residue Gly411 coordinates ADP.

It belongs to the FGGY kinase family.

It carries out the reaction glycerol + ATP = sn-glycerol 3-phosphate + ADP + H(+). Its pathway is polyol metabolism; glycerol degradation via glycerol kinase pathway; sn-glycerol 3-phosphate from glycerol: step 1/1. With respect to regulation, inhibited by fructose 1,6-bisphosphate (FBP). In terms of biological role, key enzyme in the regulation of glycerol uptake and metabolism. Catalyzes the phosphorylation of glycerol to yield sn-glycerol 3-phosphate. In Bradyrhizobium sp. (strain ORS 278), this protein is Glycerol kinase.